A 355-amino-acid chain; its full sequence is C-X-C chemokine receptor type 1 (355 aa).

At 1 to 40 the chain is on the extracellular side; it reads MEVNVWNMTDLWTWFEDEFANATGMPPVEKDYSPCLVVTQ. 2 N-linked (GlcNAc...) asparagine glycosylation sites follow: N7 and N21. A helical membrane pass occupies residues 41–67; it reads TLNKYVVVVIYALVFLLSLLGNSLVML. Over 68–73 the chain is Cytoplasmic; it reads VILYSR. A helical membrane pass occupies residues 74 to 92; it reads SNRSVTDVYLLNLAMADLL. The Extracellular portion of the chain corresponds to 93–114; that stretch reads FALTMPIWAVSKEKGWIFGTPL. A helical transmembrane segment spans residues 115-138; it reads CKVVSLVKEVNFYSGILLLACISV. The cysteines at positions 115 and 192 are disulfide-linked. Topologically, residues 139–159 are cytoplasmic; that stretch reads DRYLAIVHATRTLTQKRHLVK. A helical membrane pass occupies residues 160-184; that stretch reads FICLGIWALSLILSLPFFLFRQVFS. Over 185 to 204 the chain is Extracellular; that stretch reads PNNSSPVCYEDLGHNTAKWR. A helical membrane pass occupies residues 205-232; sequence MVLRILPHTFGFILPLLVMLFCYGFTLR. Topologically, residues 233–247 are cytoplasmic; the sequence is TLFQAHMGQKHRAMR. A helical transmembrane segment spans residues 248–270; the sequence is VIFAVVLIFLLCWLPYNLVLLAD. Topologically, residues 271–290 are extracellular; sequence TLMRTHVIQETCQRRNDIDR. Residues 291 to 313 traverse the membrane as a helical segment; that stretch reads ALDATEILGFLHSCLNPIIYAFI. Over 314 to 355 the chain is Cytoplasmic; the sequence is GQNFRNGFLKMLAARGLISKEFLTRHRVTSYTSSSTNVPSNL.

Belongs to the G-protein coupled receptor 1 family. In terms of assembly, interacts with IL8. Interacts with GNAI2. As to expression, neutrophils.

It is found in the cell membrane. Receptor to interleukin-8, which is a powerful neutrophils chemotactic factor. Binding of IL-8 to the receptor causes activation of neutrophils. This response is mediated via a G-protein that activates a phosphatidylinositol-calcium second messenger system. This is C-X-C chemokine receptor type 1 (CXCR1) from Oryctolagus cuniculus (Rabbit).